The following is a 147-amino-acid chain: Transcription elongation factor Spt5 (147 aa).

Residues 91 to 122 (KGDVVEIIAGPFKGERAKVIRVDKHKEEVTLE) form the KOW domain.

The protein belongs to the archaeal Spt5 family. Heterodimer composed of Spt4 and Spt5. Interacts with RNA polymerase (RNAP). Forms a homodimer in solution.

Functionally, stimulates transcription elongation. The sequence is that of Transcription elongation factor Spt5 from Methanocaldococcus jannaschii (strain ATCC 43067 / DSM 2661 / JAL-1 / JCM 10045 / NBRC 100440) (Methanococcus jannaschii).